The following is a 177-amino-acid chain: SsrA-binding protein (177 aa).

2 disordered regions span residues 1–23 (MYVP…KDGK) and 148–177 (YDKR…QRGE). Positions 148–165 (YDKRQTLREKQDRRESDR) are enriched in basic and acidic residues.

This sequence belongs to the SmpB family.

It is found in the cytoplasm. Its function is as follows. Required for rescue of stalled ribosomes mediated by trans-translation. Binds to transfer-messenger RNA (tmRNA), required for stable association of tmRNA with ribosomes. tmRNA and SmpB together mimic tRNA shape, replacing the anticodon stem-loop with SmpB. tmRNA is encoded by the ssrA gene; the 2 termini fold to resemble tRNA(Ala) and it encodes a 'tag peptide', a short internal open reading frame. During trans-translation Ala-aminoacylated tmRNA acts like a tRNA, entering the A-site of stalled ribosomes, displacing the stalled mRNA. The ribosome then switches to translate the ORF on the tmRNA; the nascent peptide is terminated with the 'tag peptide' encoded by the tmRNA and targeted for degradation. The ribosome is freed to recommence translation, which seems to be the essential function of trans-translation. The sequence is that of SsrA-binding protein from Streptomyces avermitilis (strain ATCC 31267 / DSM 46492 / JCM 5070 / NBRC 14893 / NCIMB 12804 / NRRL 8165 / MA-4680).